Reading from the N-terminus, the 87-residue chain is Phosphoribosyl-ATP pyrophosphatase (87 aa).

Belongs to the PRA-PH family.

Its subcellular location is the cytoplasm. It carries out the reaction 1-(5-phospho-beta-D-ribosyl)-ATP + H2O = 1-(5-phospho-beta-D-ribosyl)-5'-AMP + diphosphate + H(+). The protein operates within amino-acid biosynthesis; L-histidine biosynthesis; L-histidine from 5-phospho-alpha-D-ribose 1-diphosphate: step 2/9. This Bifidobacterium longum (strain DJO10A) protein is Phosphoribosyl-ATP pyrophosphatase.